The sequence spans 190 residues: Elongation factor P-like protein (190 aa).

This sequence belongs to the elongation factor P family.

In Klebsiella pneumoniae subsp. pneumoniae (strain ATCC 700721 / MGH 78578), this protein is Elongation factor P-like protein.